Here is a 353-residue protein sequence, read N- to C-terminus: Dihydroorotate dehydrogenase (quinone) (353 aa).

Residues 67–71 (AGFDK) and Thr-91 each bind FMN. Substrate is bound at residue Lys-71. 116 to 120 (NRMGF) is a substrate binding site. 2 residues coordinate FMN: Asn-144 and Asn-177. Substrate is bound at residue Asn-177. Ser-180 acts as the Nucleophile in catalysis. Asn-182 lines the substrate pocket. The FMN site is built by Lys-213 and Thr-241. Position 242-243 (242-243 (NT)) interacts with substrate. Residues Gly-265, Gly-294, and 315-316 (YT) contribute to the FMN site.

The protein belongs to the dihydroorotate dehydrogenase family. Type 2 subfamily. Monomer. The cofactor is FMN.

The protein localises to the cell membrane. The enzyme catalyses (S)-dihydroorotate + a quinone = orotate + a quinol. Its pathway is pyrimidine metabolism; UMP biosynthesis via de novo pathway; orotate from (S)-dihydroorotate (quinone route): step 1/1. In terms of biological role, catalyzes the conversion of dihydroorotate to orotate with quinone as electron acceptor. The polypeptide is Dihydroorotate dehydrogenase (quinone) (Mycobacteroides abscessus (strain ATCC 19977 / DSM 44196 / CCUG 20993 / CIP 104536 / JCM 13569 / NCTC 13031 / TMC 1543 / L948) (Mycobacterium abscessus)).